We begin with the raw amino-acid sequence, 637 residues long: GTPase-activating protein GYP1 (637 aa).

Positions Met-1–Ser-17 are enriched in basic and acidic residues. Disordered regions lie at residues Met-1–Tyr-152 and Arg-187–Lys-233. Residues Asp-18–Met-27 are compositionally biased toward polar residues. The span at Lys-28–Lys-45 shows a compositional bias: low complexity. The segment covering Met-46–Ala-59 has biased composition (polar residues). Ser-69 is modified (phosphoserine). Composition is skewed to polar residues over residues Gln-79–Ser-91 and Pro-98–Ser-107. A compositionally biased stretch (basic residues) spans Arg-115 to Pro-127. 2 stretches are compositionally biased toward low complexity: residues Arg-128–Ser-142 and Arg-187–Ser-207. The span at Ala-208 to Gln-223 shows a compositional bias: polar residues. The residue at position 250 (Ser-250) is a Phosphoserine. Residues Gly-280–Thr-508 form the Rab-GAP TBC domain. The segment at Asp-543–Gly-564 is disordered.

Its subcellular location is the golgi apparatus. It localises to the golgi stack. In terms of biological role, GTPase-activating protein (GAP) that stimulates specifically the intrinsic GTPase activity of Ypt/Rab-type GTPases YPT1 and YPT7. Functions on the Golgi as a negative regulator of YPT1. Functions on the vacuole as a negative regulator of YPT7. It is also active on SEC4 and YPT51. Provides a catalytic arginine (arginine finger) and glutamine (glutamine finger) in trans to accelerate the GTP hydrolysis rate of the substrate GTPase. The protein is GTPase-activating protein GYP1 (GYP1) of Saccharomyces cerevisiae (strain ATCC 204508 / S288c) (Baker's yeast).